Consider the following 156-residue polypeptide: Small ribosomal subunit protein uS7 (156 aa).

It belongs to the universal ribosomal protein uS7 family. As to quaternary structure, part of the 30S ribosomal subunit. Contacts proteins S9 and S11.

Its function is as follows. One of the primary rRNA binding proteins, it binds directly to 16S rRNA where it nucleates assembly of the head domain of the 30S subunit. Is located at the subunit interface close to the decoding center, probably blocks exit of the E-site tRNA. The polypeptide is Small ribosomal subunit protein uS7 (Chlorobaculum parvum (strain DSM 263 / NCIMB 8327) (Chlorobium vibrioforme subsp. thiosulfatophilum)).